The sequence spans 90 residues: Small ribosomal subunit protein bS16 (90 aa).

It belongs to the bacterial ribosomal protein bS16 family.

The sequence is that of Small ribosomal subunit protein bS16 from Listeria innocua serovar 6a (strain ATCC BAA-680 / CLIP 11262).